Reading from the N-terminus, the 96-residue chain is Integration host factor subunit beta (96 aa).

This sequence belongs to the bacterial histone-like protein family. Heterodimer of an alpha and a beta chain.

In terms of biological role, this protein is one of the two subunits of integration host factor, a specific DNA-binding protein that functions in genetic recombination as well as in transcriptional and translational control. The chain is Integration host factor subunit beta from Dichelobacter nodosus (strain VCS1703A).